The sequence spans 318 residues: NADH-ubiquinone oxidoreductase chain 1 (318 aa).

8 consecutive transmembrane segments (helical) span residues 2–22, 70–90, 100–120, 140–160, 172–192, 217–237, 253–273, and 294–314; these read FLVNLLLMIIPILLAVAFLTL, MFIMAPILALSLALTMWTPLP, LGVLFILAMSSLAVYSILWSG, ISYEVTLAIILLSVLLMSGSF, LWLIIPAWPLAMMWFISTLAE, GGSFALFFLAEYANIIMMNAI, EFYTTSFMIKTLLMTITFLWI, and LPLTLALCMWHVSIPILTASI.

It belongs to the complex I subunit 1 family. As to quaternary structure, core subunit of respiratory chain NADH dehydrogenase (Complex I) which is composed of 45 different subunits.

It localises to the mitochondrion inner membrane. The catalysed reaction is a ubiquinone + NADH + 5 H(+)(in) = a ubiquinol + NAD(+) + 4 H(+)(out). Core subunit of the mitochondrial membrane respiratory chain NADH dehydrogenase (Complex I) which catalyzes electron transfer from NADH through the respiratory chain, using ubiquinone as an electron acceptor. Essential for the catalytic activity and assembly of complex I. This is NADH-ubiquinone oxidoreductase chain 1 (MT-ND1) from Emballonura alecto (Philippine sheath-tailed bat).